We begin with the raw amino-acid sequence, 194 residues long: GTP cyclohydrolase-2 (194 aa).

Position 47–51 (47–51 (RVHSE)) interacts with GTP. Residues C52, C63, and C65 each contribute to the Zn(2+) site. GTP-binding positions include Q68, 90–92 (EGR), and T112. The Proton acceptor role is filled by D124. The Nucleophile role is filled by R126. GTP-binding residues include T147 and K152.

It belongs to the GTP cyclohydrolase II family. In terms of assembly, homodimer. Zn(2+) is required as a cofactor.

The catalysed reaction is GTP + 4 H2O = 2,5-diamino-6-hydroxy-4-(5-phosphoribosylamino)-pyrimidine + formate + 2 phosphate + 3 H(+). The protein operates within cofactor biosynthesis; riboflavin biosynthesis; 5-amino-6-(D-ribitylamino)uracil from GTP: step 1/4. Catalyzes the conversion of GTP to 2,5-diamino-6-ribosylamino-4(3H)-pyrimidinone 5'-phosphate (DARP), formate and pyrophosphate. The sequence is that of GTP cyclohydrolase-2 from Buchnera aphidicola subsp. Acyrthosiphon pisum (strain APS) (Acyrthosiphon pisum symbiotic bacterium).